The following is a 380-amino-acid chain: 1-deoxy-D-xylulose 5-phosphate reductoisomerase 2 (380 aa).

Ser-10, Gly-11, Ser-12, Ile-13, Gly-36, Lys-37, Asn-38, and Asn-120 together coordinate NADPH. Lys-121 provides a ligand contact to 1-deoxy-D-xylulose 5-phosphate. Glu-122 serves as a coordination point for NADPH. Asp-146 contributes to the Mn(2+) binding site. Ser-147, Glu-148, Ser-172, and His-195 together coordinate 1-deoxy-D-xylulose 5-phosphate. Glu-148 contacts Mn(2+). Position 201 (Gly-201) interacts with NADPH. Positions 208, 213, 214, and 217 each coordinate 1-deoxy-D-xylulose 5-phosphate. Glu-217 is a Mn(2+) binding site.

This sequence belongs to the DXR family. Mg(2+) serves as cofactor. Requires Mn(2+) as cofactor.

It carries out the reaction 2-C-methyl-D-erythritol 4-phosphate + NADP(+) = 1-deoxy-D-xylulose 5-phosphate + NADPH + H(+). It functions in the pathway isoprenoid biosynthesis; isopentenyl diphosphate biosynthesis via DXP pathway; isopentenyl diphosphate from 1-deoxy-D-xylulose 5-phosphate: step 1/6. Its function is as follows. Catalyzes the NADPH-dependent rearrangement and reduction of 1-deoxy-D-xylulose-5-phosphate (DXP) to 2-C-methyl-D-erythritol 4-phosphate (MEP). This is 1-deoxy-D-xylulose 5-phosphate reductoisomerase 2 from Bacillus thuringiensis subsp. konkukian (strain 97-27).